A 433-amino-acid polypeptide reads, in one-letter code: MALESLKEVARKIAGSSSIDKKFVEEMVKEIQRALIKADVNVRQVKEISDAIKKRALSEDVLPALNAKEQILKIVYEELLRGVGEGLEIPLKKAKIMLVGLQGSGKTTTTAKMAKYFKDRGMKVAVVAADTWRPAAYEQLRQLAEEYGITFYGEKGEKDAVKIVKNALEKLKDHDMIIIDTAGRHALEDELIDEMIKIAEVARPDYKLLVLDAAIGQLASKQAQAFHEAIGINGIIITKFDGTAKGGGALSAARQIGIPIAFIGTGEKVEDFERFDPAGFVSRLLGMGDIKALMEKIERIASEEELDPEAFLKGTFTLKDIYKQIEAMNKMGPVRKIFEMLPFGLGLKVDNDVMEMTQEKMKKFRVIMDSMTEEELLNPKIIDSSRIRRIAIGSGTSPQEVKELLNYYKTMKNLMKKMKKNKLPIKGLGKLGF.

GTP is bound by residues 100-107 (GLQGSGKT), 180-184 (DTAGR), and 238-241 (TKFD).

This sequence belongs to the GTP-binding SRP family. SRP54 subfamily. Part of the signal recognition particle protein translocation system, which is composed of SRP and FtsY. Archaeal SRP consists of a 7S RNA molecule of 300 nucleotides and two protein subunits: SRP54 and SRP19.

It localises to the cytoplasm. It carries out the reaction GTP + H2O = GDP + phosphate + H(+). Its function is as follows. Involved in targeting and insertion of nascent membrane proteins into the cytoplasmic membrane. Binds to the hydrophobic signal sequence of the ribosome-nascent chain (RNC) as it emerges from the ribosomes. The SRP-RNC complex is then targeted to the cytoplasmic membrane where it interacts with the SRP receptor FtsY. The sequence is that of Signal recognition particle 54 kDa protein from Archaeoglobus fulgidus (strain ATCC 49558 / DSM 4304 / JCM 9628 / NBRC 100126 / VC-16).